A 338-amino-acid chain; its full sequence is Protein SGT1 homolog (338 aa).

Alanine 2 carries the post-translational modification N-acetylalanine. TPR repeat units follow at residues 11-45 (AASR…KPDD), 46-79 (APYY…NPNS), and 80-113 (STAL…NSAD). In terms of domain architecture, CS spans 142 to 231 (QSKIKYDWYQ…PEAVRWEKLE (90 aa)). The 90-residue stretch at 249-338 (LYPSSSHYTR…PPDDMEWKKY (90 aa)) folds into the SGS domain. Serine 254 is modified (phosphoserine). A Phosphothreonine modification is found at threonine 257. A Glycyl lysine isopeptide (Lys-Gly) (interchain with G-Cter in SUMO1); alternate cross-link involves residue lysine 268. A Glycyl lysine isopeptide (Lys-Gly) (interchain with G-Cter in SUMO2); alternate cross-link involves residue lysine 268. Serine 304 carries the post-translational modification Phosphoserine.

The protein belongs to the SGT1 family. In terms of assembly, probably associates with SCF (SKP1-CUL1-F-box protein) complex through interaction with SKP1. Interacts with S100A6. Interacts with HSP90. Phosphorylated at Ser-254 and Ser-304, dephosphorylation promotes nuclear translocation, most likely due to disruption of the SUGT1-HSP90 complex.

The protein resides in the cytoplasm. It localises to the nucleus. May play a role in ubiquitination and subsequent proteasomal degradation of target proteins. This is Protein SGT1 homolog from Bos taurus (Bovine).